Here is a 289-residue protein sequence, read N- to C-terminus: Extracellular ribonuclease (289 aa).

A signal peptide spans 1–24 (MTKKLWFLPIVCLFFILGWTAPSA). A propeptide spanning residues 25–51 (SAGAPADTNLYSRLAVSTAGGTTLFPQ) is cleaved from the precursor. The tract at residues 177–197 (FDNGGSEYPKAPGNYYDGDSW) is disordered.

The protein resides in the secreted. Its function is as follows. Mg(2+)-activated ribonuclease which hydrolyzes RNA apparently nonspecifically into oligonucleotides with 5'-terminal phosphate. The chain is Extracellular ribonuclease (bsn) from Bacillus amyloliquefaciens (Bacillus velezensis).